We begin with the raw amino-acid sequence, 305 residues long: GTPase Era (305 aa).

The 171-residue stretch at 11–181 folds into the Era-type G domain; it reads RSGFISFVGR…LDVITRLLPE (171 aa). Residues 19–26 are G1; sequence GRPNTGKS. 19-26 is a GTP binding site; the sequence is GRPNTGKS. The segment at 45–49 is G2; it reads ETTRH. The tract at residues 66–69 is G3; the sequence is DTPG. Residues 66–70 and 130–133 contribute to the GTP site; these read DTPGL and TKVD. A G4 region spans residues 130-133; sequence TKVD. The segment at 160 to 162 is G5; it reads VSA. Residues 212 to 291 form the KH type-2 domain; it reads LKDELPHSVA…YLDLRIKVLK (80 aa).

Belongs to the TRAFAC class TrmE-Era-EngA-EngB-Septin-like GTPase superfamily. Era GTPase family. Monomer.

Its subcellular location is the cytoplasm. It localises to the cell membrane. Functionally, an essential GTPase that binds both GDP and GTP, with rapid nucleotide exchange. Plays a role in 16S rRNA processing and 30S ribosomal subunit biogenesis and possibly also in cell cycle regulation and energy metabolism. The polypeptide is GTPase Era (Corynebacterium diphtheriae (strain ATCC 700971 / NCTC 13129 / Biotype gravis)).